The sequence spans 187 residues: Transcriptional repressor NrdR (187 aa).

A zinc finger lies at 3 to 34; that stretch reads CPFCRHPDSRVVDSRTTDDGTSIRRRRQCPDC. The region spanning 46–136 is the ATP-cone domain; the sequence is LMVVKRSGVT…VYRAFDSLED (91 aa). Residues 146-187 are disordered; the sequence is EEQRERPAVDDEDHEDAGAERQGTDRGSGGTVEVPVPATVAD.

It belongs to the NrdR family. It depends on Zn(2+) as a cofactor.

Functionally, negatively regulates transcription of bacterial ribonucleotide reductase nrd genes and operons by binding to NrdR-boxes. The sequence is that of Transcriptional repressor NrdR from Streptomyces avermitilis (strain ATCC 31267 / DSM 46492 / JCM 5070 / NBRC 14893 / NCIMB 12804 / NRRL 8165 / MA-4680).